Consider the following 258-residue polypeptide: Granzyme K (258 aa).

The signal sequence occupies residues 1–23 (MSFSSSALVFLVAGIYMSSESFH). The propeptide at 24–25 (TE) is activation peptide. The 228-residue stretch at 26 to 253 (IIGGREVQPH…YQTWIKSKLA (228 aa)) folds into the Peptidase S1 domain. Cys-51 and Cys-67 are disulfide-bonded. Catalysis depends on charge relay system residues His-66 and Asp-110. Intrachain disulfides connect Cys-143–Cys-214, Cys-175–Cys-193, and Cys-204–Cys-228. Ser-208 serves as the catalytic Charge relay system.

Belongs to the peptidase S1 family. Granzyme subfamily. As to expression, speen, lungs and liver non-parenchymal cells.

It localises to the cytoplasmic granule. This Rattus norvegicus (Rat) protein is Granzyme K (Gzmk).